Consider the following 185-residue polypeptide: Ribosome-recycling factor (185 aa).

It belongs to the RRF family.

Its subcellular location is the cytoplasm. Its function is as follows. Responsible for the release of ribosomes from messenger RNA at the termination of protein biosynthesis. May increase the efficiency of translation by recycling ribosomes from one round of translation to another. This is Ribosome-recycling factor from Hamiltonella defensa subsp. Acyrthosiphon pisum (strain 5AT).